We begin with the raw amino-acid sequence, 216 residues long: Chaperone protein TorD (216 aa).

It belongs to the TorD/DmsD family. TorD subfamily.

The protein localises to the cytoplasm. Functionally, involved in the biogenesis of TorA. Acts on TorA before the insertion of the molybdenum cofactor and, as a result, probably favors a conformation of the apoenzyme that is competent for acquiring the cofactor. The sequence is that of Chaperone protein TorD from Photobacterium profundum (strain SS9).